The sequence spans 105 residues: Fungal protease inhibitor-1 (105 aa).

The first 19 residues, 1-19 (MKAVITLLFLACILVVTYG), serve as a signal peptide directing secretion. Disulfide bonds link cysteine 23-cysteine 56, cysteine 28-cysteine 58, cysteine 33-cysteine 59, cysteine 42-cysteine 62, cysteine 72-cysteine 93, and cysteine 87-cysteine 98.

Its function is as follows. Inhibits proteases from the fungi A.oryzae and R.oryzae, trypsin and chymotrypsin. Does not inhibit protease from the bacterium B.licheniformis or papain. This is Fungal protease inhibitor-1 from Antheraea mylitta (Tasar silkworm).